We begin with the raw amino-acid sequence, 82 residues long: MAEQCPPKRVVGAKQTLKAVLNCKVAQVYIAKDAEEHVVKKIKEACEEKGIKIVYIDTMKELGRMCGIDVGAATAADVIGER.

It belongs to the eukaryotic ribosomal protein eL8 family.

The protein is RNA-binding protein TTE2299 of Caldanaerobacter subterraneus subsp. tengcongensis (strain DSM 15242 / JCM 11007 / NBRC 100824 / MB4) (Thermoanaerobacter tengcongensis).